Here is a 331-residue protein sequence, read N- to C-terminus: Ketol-acid reductoisomerase (NADP(+)) (331 aa).

A KARI N-terminal Rossmann domain is found at 2-182 (ARMYYDADAN…GGTRGGILET (181 aa)). NADP(+)-binding positions include 25-28 (YGSQ), Ser-51, Ser-53, and 83-86 (DDVQ). His-108 is an active-site residue. Gly-134 contacts NADP(+). Positions 183–328 (TFREETETDL…KDLRAMFSWL (146 aa)) constitute a KARI C-terminal knotted domain. The Mg(2+) site is built by Asp-191, Glu-195, Glu-227, and Glu-231. Ser-252 lines the substrate pocket.

The protein belongs to the ketol-acid reductoisomerase family. Mg(2+) is required as a cofactor.

The catalysed reaction is (2R)-2,3-dihydroxy-3-methylbutanoate + NADP(+) = (2S)-2-acetolactate + NADPH + H(+). The enzyme catalyses (2R,3R)-2,3-dihydroxy-3-methylpentanoate + NADP(+) = (S)-2-ethyl-2-hydroxy-3-oxobutanoate + NADPH + H(+). It functions in the pathway amino-acid biosynthesis; L-isoleucine biosynthesis; L-isoleucine from 2-oxobutanoate: step 2/4. Its pathway is amino-acid biosynthesis; L-valine biosynthesis; L-valine from pyruvate: step 2/4. Functionally, involved in the biosynthesis of branched-chain amino acids (BCAA). Catalyzes an alkyl-migration followed by a ketol-acid reduction of (S)-2-acetolactate (S2AL) to yield (R)-2,3-dihydroxy-isovalerate. In the isomerase reaction, S2AL is rearranged via a Mg-dependent methyl migration to produce 3-hydroxy-3-methyl-2-ketobutyrate (HMKB). In the reductase reaction, this 2-ketoacid undergoes a metal-dependent reduction by NADPH to yield (R)-2,3-dihydroxy-isovalerate. The protein is Ketol-acid reductoisomerase (NADP(+)) of Picosynechococcus sp. (strain ATCC 27264 / PCC 7002 / PR-6) (Agmenellum quadruplicatum).